The following is a 142-amino-acid chain: Large ribosomal subunit protein uL11 (142 aa).

It belongs to the universal ribosomal protein uL11 family. In terms of assembly, part of the ribosomal stalk of the 50S ribosomal subunit. Interacts with L10 and the large rRNA to form the base of the stalk. L10 forms an elongated spine to which L12 dimers bind in a sequential fashion forming a multimeric L10(L12)X complex. Post-translationally, one or more lysine residues are methylated.

Forms part of the ribosomal stalk which helps the ribosome interact with GTP-bound translation factors. This chain is Large ribosomal subunit protein uL11, found in Alcanivorax borkumensis (strain ATCC 700651 / DSM 11573 / NCIMB 13689 / SK2).